A 245-amino-acid polypeptide reads, in one-letter code: Uracil-DNA glycosylase (245 aa).

Catalysis depends on Asp-82, which acts as the Proton acceptor.

This sequence belongs to the uracil-DNA glycosylase (UDG) superfamily. UNG family.

The protein resides in the cytoplasm. It carries out the reaction Hydrolyzes single-stranded DNA or mismatched double-stranded DNA and polynucleotides, releasing free uracil.. In terms of biological role, excises uracil residues from the DNA which can arise as a result of misincorporation of dUMP residues by DNA polymerase or due to deamination of cytosine. The sequence is that of Uracil-DNA glycosylase from Deinococcus geothermalis (strain DSM 11300 / CIP 105573 / AG-3a).